The primary structure comprises 150 residues: 3-dehydroquinate dehydratase (150 aa).

Tyr-26 acts as the Proton acceptor in catalysis. 3 residues coordinate substrate: Asn-77, His-83, and Asp-90. The Proton donor role is filled by His-103. Substrate contacts are provided by residues 104-105 and Arg-114; that span reads IS.

This sequence belongs to the type-II 3-dehydroquinase family. As to quaternary structure, homododecamer.

The enzyme catalyses 3-dehydroquinate = 3-dehydroshikimate + H2O. Its pathway is metabolic intermediate biosynthesis; chorismate biosynthesis; chorismate from D-erythrose 4-phosphate and phosphoenolpyruvate: step 3/7. Its function is as follows. Catalyzes a trans-dehydration via an enolate intermediate. The chain is 3-dehydroquinate dehydratase from Buchnera aphidicola subsp. Acyrthosiphon pisum (strain 5A).